The chain runs to 125 residues: Large ribosomal subunit protein bL12 (125 aa).

It belongs to the bacterial ribosomal protein bL12 family. Homodimer. Part of the ribosomal stalk of the 50S ribosomal subunit. Forms a multimeric L10(L12)X complex, where L10 forms an elongated spine to which 2 to 4 L12 dimers bind in a sequential fashion. Binds GTP-bound translation factors.

Its function is as follows. Forms part of the ribosomal stalk which helps the ribosome interact with GTP-bound translation factors. Is thus essential for accurate translation. This is Large ribosomal subunit protein bL12 from Rickettsia canadensis (strain McKiel).